Here is a 312-residue protein sequence, read N- to C-terminus: Ribosomal protein L11 methyltransferase (312 aa).

The S-adenosyl-L-methionine site is built by Thr160, Gly181, Asp203, and Asn246.

It belongs to the methyltransferase superfamily. PrmA family.

It localises to the cytoplasm. The catalysed reaction is L-lysyl-[protein] + 3 S-adenosyl-L-methionine = N(6),N(6),N(6)-trimethyl-L-lysyl-[protein] + 3 S-adenosyl-L-homocysteine + 3 H(+). Functionally, methylates ribosomal protein L11. This is Ribosomal protein L11 methyltransferase from Staphylococcus aureus (strain MRSA252).